The chain runs to 433 residues: MSKIVKVIGREIIDSRGNPTVEAEVHLEGGFVGLAAAPSGASTGSREALELRDGDKSRFMGKGVLKAVDAVNGPIAQAVIGQDAKDQANIDKIMIDLDGTENKSQFGANAILAVSLANAKAAAAAKGMPLYEHIAELNGTPGKFSMPLPMMNIINGGEHADNNVDIQEFMIQPIGAKTLKEAVRIGSEVFHNLAKVLKAKGMSTAVGDEGGYAPNLESNAAALAAIKEAVEQAGYVLGKDVTLAMDCAASEFYNPETGNYELKGEGKTFTSQEFTHYLEDLTRKYPIVSIEDGLNESDWEGFAYQTKVLGEKIQLVGDDLFVTNTKILKEGIEKGIANSILIKFNQIGSLTETLAAIKMAKDAGYTAVISHRSGETEDATIADLAVGTAAGQIKTGSMSRSDRVAKYNQLIRIEEALGNRAPFYGLKEVKGQA.

Gln167 lines the (2R)-2-phosphoglycerate pocket. The Proton donor role is filled by Glu209. Mg(2+) contacts are provided by Asp246, Glu291, and Asp318. Positions 343, 372, 373, and 394 each coordinate (2R)-2-phosphoglycerate. Lys343 (proton acceptor) is an active-site residue.

The protein belongs to the enolase family. As to quaternary structure, component of the RNA degradosome, a multiprotein complex involved in RNA processing and mRNA degradation. Requires Mg(2+) as cofactor.

The protein resides in the cytoplasm. It is found in the secreted. The protein localises to the cell surface. It catalyses the reaction (2R)-2-phosphoglycerate = phosphoenolpyruvate + H2O. It functions in the pathway carbohydrate degradation; glycolysis; pyruvate from D-glyceraldehyde 3-phosphate: step 4/5. In terms of biological role, catalyzes the reversible conversion of 2-phosphoglycerate (2-PG) into phosphoenolpyruvate (PEP). It is essential for the degradation of carbohydrates via glycolysis. The protein is Enolase of Photorhabdus laumondii subsp. laumondii (strain DSM 15139 / CIP 105565 / TT01) (Photorhabdus luminescens subsp. laumondii).